The following is a 441-amino-acid chain: Sec-independent protein translocase protein TatCo (441 aa).

A disordered region spans residues 1 to 185 (MADEERDAGL…LVGEAPESDQ (185 aa)). The segment covering 13 to 22 (ADDETDASDD) has biased composition (acidic residues). The segment covering 51-62 (TPRDETVTHGSD) has biased composition (basic and acidic residues). Acidic residues predominate over residues 75 to 104 (DNGDDSDSDTDAAPDDADDSATDSDADSDD). Basic and acidic residues predominate over residues 105 to 117 (EPRLLADDEHTSH). Acidic residues-rich tracts occupy residues 122-138 (TYDD…DPDA) and 164-173 (EDADFDDEDV). A run of 6 helical transmembrane segments spans residues 200–220 (LAVV…GADI), 276–296 (VAGL…TYLF), 317–337 (LVLA…AIFA), 357–377 (FNLI…PLFV), 395–415 (RLLF…DPTG), and 416–436 (MAPI…LAAL).

Belongs to the TatC family. In terms of assembly, forms a complex with TatA.

Its subcellular location is the cell membrane. Its function is as follows. Part of the twin-arginine translocation (Tat) system that transports large folded proteins containing a characteristic twin-arginine motif in their signal peptide across membranes. The protein is Sec-independent protein translocase protein TatCo of Haloferax volcanii (strain ATCC 29605 / DSM 3757 / JCM 8879 / NBRC 14742 / NCIMB 2012 / VKM B-1768 / DS2) (Halobacterium volcanii).